Consider the following 174-residue polypeptide: Peptide methionine sulfoxide reductase MsrA (174 aa).

Cys-10 is a catalytic residue.

It belongs to the MsrA Met sulfoxide reductase family.

It catalyses the reaction L-methionyl-[protein] + [thioredoxin]-disulfide + H2O = L-methionyl-(S)-S-oxide-[protein] + [thioredoxin]-dithiol. It carries out the reaction [thioredoxin]-disulfide + L-methionine + H2O = L-methionine (S)-S-oxide + [thioredoxin]-dithiol. Functionally, has an important function as a repair enzyme for proteins that have been inactivated by oxidation. Catalyzes the reversible oxidation-reduction of methionine sulfoxide in proteins to methionine. This chain is Peptide methionine sulfoxide reductase MsrA, found in Arthrobacter sp. (strain FB24).